The sequence spans 545 residues: 2-oxo-Delta(3)-4,5,5-trimethylcyclopentenylacetyl-CoA monooxygenase (545 aa).

Residues Thr20, Glu39, 47–50, 59–60, Tyr65, and Val112 each bind FAD; these read TWYW and DT. 57-59 is an NADP(+) binding site; that stretch reads RLD. NADP(+)-binding positions include 193–199 and 216–217; these read TGATGVQ and RT. An FAD-binding site is contributed by Val446. Trp501 provides a ligand contact to NADP(+).

This sequence belongs to the FAD-binding monooxygenase family. Homodimer. FAD is required as a cofactor.

It carries out the reaction [(1R)-2,2,3-trimethyl-5-oxocyclopent-3-enyl]acetyl-CoA + NADPH + O2 + H(+) = [(2R)-3,3,4-trimethyl-6-oxo-3,6-dihydro-1H-pyran-2-yl]acetyl-CoA + NADP(+) + H2O. It functions in the pathway terpene metabolism; (R)-camphor degradation. In terms of biological role, involved in the degradation of (+)-camphor. Catalyzes the lactonization of 2-oxo-delta(3)-4,5, 5-trimethylcyclopentenylacetyl-CoA (OT-CoA), a key intermediate in the metabolism of camphor. 2-Oxocyclopentyl ethyl acetate is also a good substrate, as is 2-oxocyclohexyl ethyl acetate and methyl-substituted cyclohexanones, but free acid is a poor substrate. This chain is 2-oxo-Delta(3)-4,5,5-trimethylcyclopentenylacetyl-CoA monooxygenase (otemo), found in Pseudomonas putida (Arthrobacter siderocapsulatus).